Consider the following 108-residue polypeptide: uncharacterized protein (108 aa).

Helical transmembrane passes span 4-24, 46-66, and 81-101; these read IIFL…FFSM, GMMV…IFIG, and IMAI…WFVL.

It is found in the cell membrane. This is an uncharacterized protein from Escherichia coli O157:H7.